A 726-amino-acid polypeptide reads, in one-letter code: MSTESERIESVSEANASSLEVGNDQMSEALAGQAQELKTIGDDKEGCGNFASAGDNGMEKVNGFTNLVKETESVNGELDLGTRTENVGGESNQSDKKVLVDSEEVMMVEKRGLLVEKEVEPDMVCSHGADLSDVKVSDGRLDSEDLVQDRKPDGLEKQGTKVEDLDVVCFMGLEPHESKDESILDDEIAHVAAKVKISDSDLVWAKVRSHPWWPGQVFDASAATDKAKKHFKKGSFLVTYFGDCTFAWNEASRIKPFRQHFSQMAKQSSLPDFIDAIDFALEEVSRRIEFGLACSCISEEVYQKIKTQNVINPGIREDSSSIHGGDKVSSAVFFEPANLVGYVKRLACSPSYDATDALQLVSQRAQLLAFNRWKGYTDLPEFMTLQGSVESAPKISPAEEQSSLVEVSDPEPTKSKQVYTKRRKTNLQTEQSSLVEVSDPDKGDCKHDGVFEYEETIVPKKKEKTLAEFIAEKRVSRHNGNTSHEKSGNVPHCEKKRKVVQSKVPKSTKKIKANLQTEDPGSPVSPKNDRKNNLSAGDKITPQKARKSFGIGASILKVANQMHCSTPTRLLPCSDSTSKKAAKSNGSGKSLQEKPKAEALSAREISPSTTLSSPHAASVTKTTSGKSNSVSLDHNLSGELDQVRKEAPSTNLVEDPMLESRDLKDSSKEQVVHEDKKEAANVADEKSIMDSNLTGEKISGLDLREQPSNKNCSGGSDSCKEDVSAE.

The segment covering 1–10 (MSTESERIES) has biased composition (basic and acidic residues). The segment at 1 to 26 (MSTESERIESVSEANASSLEVGNDQM) is disordered. Residues 12 to 26 (SEANASSLEVGNDQM) show a composition bias toward polar residues. Residues 199-260 (DSDLVWAKVR…ASRIKPFRQH (62 aa)) form the PWWP domain. The interval 392–441 (APKISPAEEQSSLVEVSDPEPTKSKQVYTKRRKTNLQTEQSSLVEVSDPD) is disordered. Positions 426 to 435 (NLQTEQSSLV) are enriched in polar residues. 2 consecutive short sequence motifs (nuclear localization signal) follow at residues 460–467 (KKKEKTLA) and 495–502 (KKRKVVQS). 2 disordered regions span residues 472 to 545 (EKRV…PQKA) and 568 to 726 (TRLL…VSAE). The span at 494–512 (EKKRKVVQSKVPKSTKKIK) shows a compositional bias: basic residues. Residues 606–634 (SPSTTLSSPHAASVTKTTSGKSNSVSLDH) show a composition bias toward polar residues. The span at 658–688 (LESRDLKDSSKEQVVHEDKKEAANVADEKSI) shows a compositional bias: basic and acidic residues.

Belongs to the PDP family. Interacts with DEK3. Binds to MSI4/FVE and MSI5. Component of the PRC2 (polycomb repressive complex 2) complex which regulates histone methylation on histone H3K27.

The protein resides in the nucleus. Together with PDP1, PDP3 and PDP6, interacts with MSI4/FVE and MSI5 to suppress FLC, MAF4 and MAF5 expression by regulating the function of the PRC2 complex and modulating H3K27me3 level, thereby promoting flowering. In Arabidopsis thaliana (Mouse-ear cress), this protein is PWWP domain-containing protein 2.